A 299-amino-acid polypeptide reads, in one-letter code: Zinc finger protein 414 (299 aa).

Composition is skewed to polar residues over residues 1 to 20 (MEEL…SSSN) and 70 to 80 (SCQTSSTTRGV). The tract at residues 1-102 (MEELSGPSSD…PPPGKQIPCS (102 aa)) is disordered. 2 consecutive C2H2-type zinc fingers follow at residues 99–123 (IPCS…LRTH) and 135–159 (FRCS…GKLH). Residues 166–190 (FKCENCLLRFRTHRSLFKHLHVCID) form a C2H2-type 3; degenerate zinc finger. Disordered regions lie at residues 193-228 (QNPA…PFPL) and 254-299 (PRLR…GACR). The span at 203–215 (LDKEPPVPERPPE) shows a compositional bias: basic and acidic residues. A compositionally biased stretch (low complexity) spans 217 to 228 (DPSSSLGLPFPL). Residues 268 to 285 (TSSTAIWKKSQGATSSPR) are compositionally biased toward polar residues.

Belongs to the krueppel C2H2-type zinc-finger protein family.

The protein resides in the nucleus. Functionally, may be involved in transcriptional regulation. The polypeptide is Zinc finger protein 414 (Znf414) (Rattus norvegicus (Rat)).